Reading from the N-terminus, the 393-residue chain is Actin-related protein 2 (393 aa).

ATP contacts are provided by residues 158 to 160, 212 to 216, and 303 to 308; these read GDG, RQMKE, and GGTTMY.

Belongs to the actin family. ARP2 subfamily. Component of the Arp2/3 complex.

It is found in the cytoplasm. Its subcellular location is the cytoskeleton. In terms of biological role, functions as ATP-binding component of the Arp2/3 complex which is involved in regulation of actin polymerization and together with an activating nucleation-promoting factor (NPF) mediates the formation of branched actin networks. Seems to contact the pointed end of the daughter actin filament. The polypeptide is Actin-related protein 2 (arx-2) (Caenorhabditis briggsae).